Here is a 500-residue protein sequence, read N- to C-terminus: Ribose import ATP-binding protein RbsA (500 aa).

ABC transporter domains are found at residues 6 to 242 (LALS…VGRK) and 252 to 495 (AQQG…VGRN). Residue 38–45 (GENGAGKS) participates in ATP binding.

Belongs to the ABC transporter superfamily. Ribose importer (TC 3.A.1.2.1) family. In terms of assembly, the complex is composed of an ATP-binding protein (RbsA), two transmembrane proteins (RbsC) and a solute-binding protein (RbsB).

The protein resides in the cell inner membrane. It catalyses the reaction D-ribose(out) + ATP + H2O = D-ribose(in) + ADP + phosphate + H(+). Part of the ABC transporter complex RbsABC involved in ribose import. Responsible for energy coupling to the transport system. The chain is Ribose import ATP-binding protein RbsA from Vibrio cholerae serotype O1 (strain ATCC 39315 / El Tor Inaba N16961).